The chain runs to 424 residues: Ribulose bisphosphate carboxylase (424 aa).

The Proton acceptor role is filled by Lys-159. Residue Lys-161 participates in substrate binding. Residues Lys-185, Asp-187, and Glu-188 each contribute to the Mg(2+) site. Lys-185 carries the N6-carboxylysine modification. His-277 (proton acceptor) is an active-site residue. Substrate contacts are provided by residues Arg-278, His-310, Ser-347–Gly-349, and Gln-369–Gly-372.

Belongs to the RuBisCO large chain family. Type III subfamily. As to quaternary structure, homodimer or homodecamer. In contrast to form I RuBisCO, the form III RuBisCO is composed solely of large subunits. The cofactor is Mg(2+).

The enzyme catalyses 2 (2R)-3-phosphoglycerate + 2 H(+) = D-ribulose 1,5-bisphosphate + CO2 + H2O. The catalysed reaction is D-ribulose 1,5-bisphosphate + O2 = 2-phosphoglycolate + (2R)-3-phosphoglycerate + 2 H(+). In terms of biological role, catalyzes the addition of molecular CO(2) and H(2)O to ribulose 1,5-bisphosphate (RuBP), generating two molecules of 3-phosphoglycerate (3-PGA). Functions in an archaeal AMP degradation pathway, together with AMP phosphorylase and R15P isomerase. This is Ribulose bisphosphate carboxylase from Pyrococcus abyssi (strain GE5 / Orsay).